The sequence spans 503 residues: MAAALRFDNIGKVFPGVRALDGISFDVQAGQVHGLMGENGAGKSTLLKILGGEYQPDSGSVLVDGRAMRFPSAAASIAAGVAVIHQELQYVPDLTVAENLLLGRLPSALGWVRKRDAQRFVRERLAAMGVDLDAQAKLRRLSIAQRQMVEICKALLRNARVIALDEPTSSLSHRETEVLFKLVDDLRRDGRALIYISHRMDEIYRLCDACTIFRDGRQVASHASLANVPRETLVRQMVGREISDIYHYAPRALGDVRLSARALEGDALRAGASFDVRAGEIVGFFGLVGAGRSELMRVIYGAQRRTGGALTLDGEPLDIRSTRDAIRRGIVLCPEDRKEEGIVAHASVAENINISCRRHGLRAGLFLDRKREAETADRFIKLLKIKTPNRRQKIRFLSGGNQQKAILARWLAEPDLKVVILDEPTRGIDVGAKHEIYGVIYELAKRGCAIVMVSSELPEVLGVSDRIVVMREGRIAGELARGEANEEAVLNLALPQGATAHAA.

ABC transporter domains lie at 5 to 240 and 253 to 497; these read LRFD…MVGR and LGDV…LPQG. 37-44 contacts ATP; sequence GENGAGKS.

It belongs to the ABC transporter superfamily. Arabinose importer (TC 3.A.1.2.2) family. As to quaternary structure, the complex is composed of two ATP-binding proteins (AraG), two transmembrane proteins (AraH) and a solute-binding protein (AraF).

The protein resides in the cell inner membrane. The catalysed reaction is L-arabinose(out) + ATP + H2O = L-arabinose(in) + ADP + phosphate + H(+). In terms of biological role, part of the ABC transporter complex AraFGH involved in arabinose import. Responsible for energy coupling to the transport system. The chain is Arabinose import ATP-binding protein AraG from Burkholderia pseudomallei (strain 1710b).